The chain runs to 1845 residues: Helicase swr-1 (1845 aa).

Polar residues predominate over residues 1–13; that stretch reads MTTMMTDSGTASD. Positions 1 to 329 are disordered; that stretch reads MTTMMTDSGT…GASRATPRIK (329 aa). A compositionally biased stretch (low complexity) spans 24 to 38; it reads NDTTTTTTTTTTPGD. Polar residues predominate over residues 63–84; sequence SKSYSSTHHVPAIDNTSTTNAN. The span at 98–108 shows a compositional bias: low complexity; that stretch reads SPLSSISSPLS. Basic and acidic residues predominate over residues 168–180; the sequence is PKPESPPWKKFEA. Polar residues predominate over residues 216–243; the sequence is AIQTSPVSNKSSASTSRKPAPASSSNSK. 2 stretches are compositionally biased toward pro residues: residues 248-258 and 283-292; these read KMPPPPPPPKA and PRRPATPPKP. In terms of domain architecture, HSA spans 418–493; the sequence is PEAEEEPPRQ…EMEASKAKWR (76 aa). Disordered stretches follow at residues 539–713 and 749–935; these read QKLQ…LFFG and ELQV…TVKT. Acidic residues predominate over residues 549-565; the sequence is DGDEITDEDEDEDDEDL. Over residues 574-585 the composition is skewed to basic and acidic residues; that stretch reads GDEKESDEHSDQ. Acidic residues-rich tracts occupy residues 586–608 and 663–704; these read GSDE…SSED and NDDD…DDEP. Polar residues-rich tracts occupy residues 762 to 777 and 815 to 834; these read TNGT…SQTE and TNDS…NQTL. The segment covering 888 to 897 has biased composition (low complexity); it reads SQSQTQSPKT. The span at 898–909 shows a compositional bias: basic and acidic residues; it reads TDTKPTDVDTPH. Residues 922 to 933 show a composition bias toward polar residues; the sequence is RQSSPQPTTPTV. The 166-residue stretch at 957–1122 folds into the Helicase ATP-binding domain; it reads AGLYANNTNG…WSLLYFLAPP (166 aa). An ATP-binding site is contributed by 970–977; sequence DEMGLGKT. Residues 1073–1076 carry the DEAH box motif; sequence DEAH. The 151-residue stretch at 1510-1660 folds into the Helicase C-terminal domain; the sequence is ALDKLLRKLQ…DVVIQEGEFT (151 aa). Disordered regions lie at residues 1702-1724, 1751-1783, and 1816-1845; these read TTGA…PPVR, QDEA…GGEE, and LEGT…SRKR. Gly residues predominate over residues 1704–1718; the sequence is GAGGYDGTADGGGGA. Over residues 1769-1781 the composition is skewed to low complexity; the sequence is DGLADLDGQLLGG. The span at 1826-1845 shows a compositional bias: basic residues; that stretch reads DRKKGRDRNRNRKGKDSRKR.

This sequence belongs to the SNF2/RAD54 helicase family. SWR1 subfamily. As to quaternary structure, component of the SWR1 chromatin-remodeling complex.

The protein resides in the nucleus. It carries out the reaction ATP + H2O = ADP + phosphate + H(+). Functionally, catalytic component of the SWR1 complex which mediates the ATP-dependent exchange of histone H2A for the H2A variant H2A.Z leading to transcriptional regulation of selected genes by chromatin remodeling. This is Helicase swr-1 (crf1-1) from Neurospora crassa (strain ATCC 24698 / 74-OR23-1A / CBS 708.71 / DSM 1257 / FGSC 987).